The chain runs to 130 residues: Small ribosomal subunit protein uS11 (130 aa).

The protein belongs to the universal ribosomal protein uS11 family. As to quaternary structure, part of the 30S ribosomal subunit. Interacts with proteins S7 and S18. Binds to IF-3.

Located on the platform of the 30S subunit, it bridges several disparate RNA helices of the 16S rRNA. Forms part of the Shine-Dalgarno cleft in the 70S ribosome. This Pseudoalteromonas atlantica (strain T6c / ATCC BAA-1087) protein is Small ribosomal subunit protein uS11.